The primary structure comprises 314 residues: L-lactate dehydrogenase 2 (314 aa).

NAD(+)-binding positions include Val-16, Asp-37, Lys-42, Tyr-68, and 82–83; that span reads GL. Residues Gln-85, Arg-91, and 123 to 126 each bind substrate; that span reads NPVD. Residues 121-123 and Ser-146 each bind NAD(+); that span reads ATN. 151–154 provides a ligand contact to substrate; sequence DSAR. The beta-D-fructose 1,6-bisphosphate site is built by Arg-156 and His-171. Catalysis depends on His-178, which acts as the Proton acceptor. Position 223 is a phosphotyrosine (Tyr-223). Thr-232 provides a ligand contact to substrate.

It belongs to the LDH/MDH superfamily. LDH family. As to quaternary structure, homotetramer.

Its subcellular location is the cytoplasm. The catalysed reaction is (S)-lactate + NAD(+) = pyruvate + NADH + H(+). It functions in the pathway fermentation; pyruvate fermentation to lactate; (S)-lactate from pyruvate: step 1/1. Its activity is regulated as follows. Allosterically activated by fructose 1,6-bisphosphate (FBP). Its function is as follows. Catalyzes the conversion of lactate to pyruvate. This Bacillus cereus (strain ATCC 10987 / NRS 248) protein is L-lactate dehydrogenase 2.